The sequence spans 425 residues: uncharacterized protein (425 aa).

The protein to K.pneumoniae SorE.

This is an uncharacterized protein from Escherichia coli (strain K12).